Consider the following 379-residue polypeptide: Cytochrome b (379 aa).

4 consecutive transmembrane segments (helical) span residues 33–53 (FGSLLGACLTIQIITGLFLAM), 77–98 (WTIRYLHANGASMFFLCLFIHV), 113–133 (WNVGITLLFSVMATAFMGYVL), and 178–198 (FFALHFILPFITSALVMIHLL). Positions 83 and 97 each coordinate heme b. The heme b site is built by histidine 182 and histidine 196. Histidine 201 is an a ubiquinone binding site. 4 helical membrane passes run 226–246 (TKDFLGLLLLILLLMTMALFY), 288–308 (LGGVMALILSILILVMFPFLQ), 320–340 (LSQFLFWILVADLLTLTWIGG), and 347–367 (FINIGQMASMLYFSLMIFIMP).

Belongs to the cytochrome b family. The cytochrome bc1 complex contains 11 subunits: 3 respiratory subunits (MT-CYB, CYC1 and UQCRFS1), 2 core proteins (UQCRC1 and UQCRC2) and 6 low-molecular weight proteins (UQCRH/QCR6, UQCRB/QCR7, UQCRQ/QCR8, UQCR10/QCR9, UQCR11/QCR10 and a cleavage product of UQCRFS1). This cytochrome bc1 complex then forms a dimer. Heme b serves as cofactor.

The protein resides in the mitochondrion inner membrane. Component of the ubiquinol-cytochrome c reductase complex (complex III or cytochrome b-c1 complex) that is part of the mitochondrial respiratory chain. The b-c1 complex mediates electron transfer from ubiquinol to cytochrome c. Contributes to the generation of a proton gradient across the mitochondrial membrane that is then used for ATP synthesis. The chain is Cytochrome b (MT-CYB) from Lepilemur sahamalazensis (Sahamalaza sportive lemur).